Here is a 186-residue protein sequence, read N- to C-terminus: UPF0340 protein SZO_02480 (186 aa).

The protein belongs to the UPF0340 family.

The polypeptide is UPF0340 protein SZO_02480 (Streptococcus equi subsp. zooepidemicus (strain H70)).